The following is a 339-amino-acid chain: Anthranilate phosphoribosyltransferase (339 aa).

Residues glycine 79, 82-83 (GD), threonine 87, 89-92 (NIST), 107-115 (KHGNRAVSS), and serine 119 each bind 5-phospho-alpha-D-ribose 1-diphosphate. Glycine 79 provides a ligand contact to anthranilate. Serine 91 is a binding site for Mg(2+). An anthranilate-binding site is contributed by asparagine 110. Arginine 165 lines the anthranilate pocket. Residues aspartate 224 and glutamate 225 each coordinate Mg(2+).

This sequence belongs to the anthranilate phosphoribosyltransferase family. In terms of assembly, homodimer. Requires Mg(2+) as cofactor.

The catalysed reaction is N-(5-phospho-beta-D-ribosyl)anthranilate + diphosphate = 5-phospho-alpha-D-ribose 1-diphosphate + anthranilate. The protein operates within amino-acid biosynthesis; L-tryptophan biosynthesis; L-tryptophan from chorismate: step 2/5. Functionally, catalyzes the transfer of the phosphoribosyl group of 5-phosphorylribose-1-pyrophosphate (PRPP) to anthranilate to yield N-(5'-phosphoribosyl)-anthranilate (PRA). This chain is Anthranilate phosphoribosyltransferase, found in Geobacillus sp. (strain WCH70).